The following is a 762-amino-acid chain: MALAHNLGFPRIGRDRELKKAQEAYWKGELDEAGLCAVGRGLRAAHWQAQKAAGIELLPVGDFAWYDQVLTHSLTFGVIPERFRAKDGAKPTLQTLFAMARGVSDSCCGGAHAQEMTKWFDTNYHYLVPEFTADQQFALSWEQLFEEVEEAKALGHAVKPVVIGPLTYLWLGKTKGADFDKLELLDRLLPLYDQILNRLAVQGVEWVQIDEPILALDLPQDWKNAYERVYNILQRAPLKKLIATYFGGLEDNLGLAANLPVDGLHIDLVRAPDQYPTILDRLPAYKVLSLGVVNGRNVWRCDLEKALEVLRHAHERLGDRLWVAPSCSLLHSPVDLAREDKLDDELKSWLAFAVQKCQEVALLAKAINQPEAADVVTVLAQSRAVQHRRATSPRIHKPAVQARVAAIKPADSQRATAFEQRIAKQRAGLDLPAFPTTTIGSFPQTSAIRLARQSFKQGKLTEADYVEAMHSEIRHAVEIQENLGLDVLVHGEAERNDMVEYFAEQLDGYVFTRFGWVQSYGSRCVKPAVIFGDLSRPKAMTVEWIKYAQGLTRKAMKGMLTGPVTMLMWSFPREDVTREVQARQLALAIRDEVVDLEAAGIKIVQIDEAAFREGLPLRRSAWPHYLEWATEAFRLCASDVRDETQIHTHMCYSEFNDVIESIAAMDADVITIETSRSDMELLEAFERFDYPNEIGPGVYDIHSPRVPTKEEMVKLLRKAAQRIPAERLWVNPDCGLKTRAWPETEAALVNMVAAARELRATA.

5-methyltetrahydropteroyltri-L-glutamate is bound by residues 16–19 (RELK) and K118. L-homocysteine contacts are provided by residues 439–441 (IGS) and E492. L-methionine-binding positions include 439–441 (IGS) and E492. 5-methyltetrahydropteroyltri-L-glutamate contacts are provided by residues 523 to 524 (RC) and W569. D607 lines the L-homocysteine pocket. L-methionine is bound at residue D607. E613 contributes to the 5-methyltetrahydropteroyltri-L-glutamate binding site. Residues H649, C651, and E673 each contribute to the Zn(2+) site. H702 acts as the Proton donor in catalysis. C734 lines the Zn(2+) pocket.

Belongs to the vitamin-B12 independent methionine synthase family. Requires Zn(2+) as cofactor.

The catalysed reaction is 5-methyltetrahydropteroyltri-L-glutamate + L-homocysteine = tetrahydropteroyltri-L-glutamate + L-methionine. Its pathway is amino-acid biosynthesis; L-methionine biosynthesis via de novo pathway; L-methionine from L-homocysteine (MetE route): step 1/1. Functionally, catalyzes the transfer of a methyl group from 5-methyltetrahydrofolate to homocysteine resulting in methionine formation. The polypeptide is 5-methyltetrahydropteroyltriglutamate--homocysteine methyltransferase (Pseudomonas entomophila (strain L48)).